Here is a 226-residue protein sequence, read N- to C-terminus: Urease accessory protein UreF (226 aa).

It belongs to the UreF family. UreD, UreF and UreG form a complex that acts as a GTP-hydrolysis-dependent molecular chaperone, activating the urease apoprotein by helping to assemble the nickel containing metallocenter of UreC. The UreE protein probably delivers the nickel.

Its subcellular location is the cytoplasm. In terms of biological role, required for maturation of urease via the functional incorporation of the urease nickel metallocenter. The polypeptide is Urease accessory protein UreF (Corynebacterium glutamicum (strain R)).